Here is a 370-residue protein sequence, read N- to C-terminus: Nociceptin receptor (370 aa).

Residues 1-48 (MESLFPAPFWEVLYGSPLQGNLSLLSPNHSLLPPHLLLNASHGAFLPL) are Extracellular-facing. 3 N-linked (GlcNAc...) asparagine glycosylation sites follow: asparagine 21, asparagine 28, and asparagine 39. Residues 49–74 (GLKVTIVGLYLAVCVGGLLGNCLVMY) traverse the membrane as a helical segment. The Cytoplasmic segment spans residues 75–87 (VILRHTKMKTATN). The helical transmembrane segment at 88–109 (IYIFNLALADTAVLLTLPFQGT) threads the bilayer. Residues 110 to 124 (DVLLGFWPFGNALCK) are Extracellular-facing. Cysteine 123 and cysteine 200 form a disulfide bridge. A helical membrane pass occupies residues 125-146 (AVIAIDYYNMFTSAFTLTAMSV). The Cytoplasmic portion of the chain corresponds to 147-165 (DRYVAICHPIRALDVRTSS). The chain crosses the membrane as a helical span at residues 166–188 (KAQAVNVAIWALASIVGVPVAIM). The Extracellular portion of the chain corresponds to 189 to 211 (GSAQVEDEEIECLVEIPAPQDYW). Residues 212-236 (GPVFAVCIFLFSFVIPVLIISVCYS) traverse the membrane as a helical segment. Topologically, residues 237 to 264 (LMVRRLRGVRLLSGSREKDRNLRRITRL) are cytoplasmic. The chain crosses the membrane as a helical span at residues 265–285 (VLVVVAVFVGCWTPVQVFVLV). The Extracellular segment spans residues 286-300 (QGLGVQPGSETAVAV). Residues 301–322 (LRFCTALGYVNSCLNPILYAFL) form a helical membrane-spanning segment. Residues 323–370 (DENFKACFRKFCCAPTRRREMQVSDRVRSIAKDVALACKTSETVPRPA) lie on the Cytoplasmic side of the membrane. A lipid anchor (S-palmitoyl cysteine) is attached at cysteine 334.

It belongs to the G-protein coupled receptor 1 family. Phosphorylation at Ser-363 requires GRK3. In terms of tissue distribution, detected in brain cortex, stomach, ileum, jejunum and colon.

The protein resides in the cell membrane. It localises to the cytoplasmic vesicle. Its function is as follows. G-protein coupled opioid receptor that functions as a receptor for the endogenous neuropeptide nociceptin. Ligand binding causes a conformation change that triggers signaling via guanine nucleotide-binding proteins (G proteins) and modulates the activity of down-stream effectors. Signaling via G proteins mediates inhibition of adenylate cyclase activity and calcium channel activity. Arrestins modulate signaling via G proteins and mediate the activation of alternative signaling pathways that lead to the activation of MAP kinases. Plays a role in modulating nociception and the perception of pain. Plays a role in the regulation of locomotor activity by the neuropeptide nociceptin. This Sus scrofa (Pig) protein is Nociceptin receptor (OPRL1).